We begin with the raw amino-acid sequence, 667 residues long: Leucine zipper putative tumor suppressor 2 (667 aa).

Low complexity predominate over residues 1-25 (MAIVQTLPVPLEPAPEAATAQQAPA). 3 disordered regions span residues 1–132 (MAIV…PVSG), 150–325 (PVLP…DEAL), and 516–541 (QEAE…PPVP). Residues 1–333 (MAIVQTLPVP…ALLHCVLEGK (333 aa)) are required for centrosomal localization. The segment covering 172 to 181 (PSGSQGSLTQ) has biased composition (polar residues). Positions 187–198 (ASSSSSSSSSAA) are enriched in low complexity. Positions 212-232 (PSGTLSDSGRNSLSSLPTYST) are enriched in polar residues. Low complexity predominate over residues 241 to 282 (SPGGHLPSHGPGRGALPGPARGAPTGPSHSDSGRSSSSKSTG). Position 248 is a phosphoserine (Ser-248). Gly residues predominate over residues 283 to 294 (SLGGRLAGGLLG). Ser-295 is subject to Phosphoserine. Pro residues predominate over residues 310-321 (SPPPPPPPPPPS). The stretch at 329–647 (VLEGKLRDRE…LELEARELAD (319 aa)) forms a coiled coil. Positions 445–667 (SGEISLLKQQ…CLEEITATEI (223 aa)) are sufficient for interaction with CTNNB1. The segment at 448 to 667 (ISLLKQQLKE…CLEEITATEI (220 aa)) is sufficient for interaction with KATNB1 and for inhibition of katanin-mediated microtubule severing. The segment covering 516–526 (QEAERLREKAG) has biased composition (basic and acidic residues). Ser-568 carries the post-translational modification Phosphoserine. Residues 629–638 (LEQELQQLSL) carry the Nuclear export signal motif.

Belongs to the LZTS2 family. Interacts with KATNB1. Also interacts with CTNNB1, gamma-tubulin and KIF23.

The protein resides in the cytoplasm. It is found in the cytoskeleton. Its subcellular location is the microtubule organizing center. It localises to the centrosome. Its function is as follows. Negative regulator of katanin-mediated microtubule severing and release from the centrosome. Required for central spindle formation and the completion of cytokinesis. May negatively regulate axonal outgrowth by preventing the formation of microtubule bundles that are necessary for transport within the elongating axon. Negative regulator of the Wnt signaling pathway. Represses beta-catenin-mediated transcriptional activation by promoting the nuclear exclusion of beta-catenin. This Bos taurus (Bovine) protein is Leucine zipper putative tumor suppressor 2.